The chain runs to 359 residues: DNA polymerase IV (359 aa).

A UmuC domain is found at isoleucine 4–glycine 184. The Mg(2+) site is built by aspartate 8 and aspartate 102. The active site involves glutamate 103.

The protein belongs to the DNA polymerase type-Y family. As to quaternary structure, monomer. The cofactor is Mg(2+).

The protein localises to the cytoplasm. It carries out the reaction DNA(n) + a 2'-deoxyribonucleoside 5'-triphosphate = DNA(n+1) + diphosphate. Its function is as follows. Poorly processive, error-prone DNA polymerase involved in untargeted mutagenesis. Copies undamaged DNA at stalled replication forks, which arise in vivo from mismatched or misaligned primer ends. These misaligned primers can be extended by PolIV. Exhibits no 3'-5' exonuclease (proofreading) activity. May be involved in translesional synthesis, in conjunction with the beta clamp from PolIII. The protein is DNA polymerase IV of Xanthomonas campestris pv. campestris (strain 8004).